We begin with the raw amino-acid sequence, 337 residues long: MNKILILLLLVSAVLTSHDQVVAVTIKPNLYNINSAPLYFEKFISQYNKQYSSEDEKKYRYNIFRHNIESINAKNSRNDSAVYKINRFADMTKNEVVNRHTGLASGDIGANFCETIVVDGPGQRQRPANFDWRNYNKVTSVKDQGMCGACWAFAGLGALESQYAIKYDRLIDLAEQQLVDCDFVDMGCDGGLIHTAYEQIMHIGGVEQEYDYPYKAVRLPCAVKPHKFAVGVRNCYRYVLLSEERLEDLLRHVGPIAIAVDAVDLTDYYGGVISFCENNGLNHAVLLVGYGIENNVPYWTIKNSWGSDYGENGYVRIRRGVNSCGMINELASSAQIA.

An N-terminal signal peptide occupies residues 1-16 (MNKILILLLLVSAVLT). The propeptide at 17-126 (SHDQVVAVTI…VVDGPGQRQR (110 aa)) is activation peptide. Cystine bridges form between C147/C188, C181/C221, and C276/C324. C150 is an active-site residue. Active-site residues include H283 and N303.

The protein belongs to the peptidase C1 family. In terms of processing, synthesized as an inactive proenzyme and activated by proteolytic removal of the inhibitory propeptide.

It catalyses the reaction Endopeptidase of broad specificity, hydrolyzing substrates of both cathepsin L and cathepsin B.. Functionally, cysteine protease that plays an essential role in host liquefaction to facilitate horizontal transmission of the virus. May participate in the degradation of foreign protein expressed by the baculovirus system. This Mamestra configurata (bertha armyworm) protein is Viral cathepsin (VCATH).